A 123-amino-acid chain; its full sequence is Large ribosomal subunit protein uL14 (123 aa).

It belongs to the universal ribosomal protein uL14 family. Part of the 50S ribosomal subunit. Forms a cluster with proteins L3 and L19. In the 70S ribosome, L14 and L19 interact and together make contacts with the 16S rRNA in bridges B5 and B8.

Its function is as follows. Binds to 23S rRNA. Forms part of two intersubunit bridges in the 70S ribosome. This chain is Large ribosomal subunit protein uL14, found in Actinobacillus succinogenes (strain ATCC 55618 / DSM 22257 / CCUG 43843 / 130Z).